Reading from the N-terminus, the 149-residue chain is Dehydrin Rab15 (149 aa).

The interval 1–149 (MEFQGQHDNP…KIKEKLPGQH (149 aa)) is disordered. Basic and acidic residues predominate over residues 78 to 93 (KEKIKEKLPGGHKDNQ). A compositionally biased stretch (gly residues) spans 100–117 (TGTGGAYGPGTGTGGAYG). Residues 132-149 (GEKKGIMDKIKEKLPGQH) show a composition bias toward basic and acidic residues.

Belongs to the plant dehydrin family.

This is Dehydrin Rab15 (RAB15) from Triticum aestivum (Wheat).